Consider the following 447-residue polypeptide: tRNA threonylcarbamoyladenosine dehydratase 2 (447 aa).

The next 3 helical transmembrane spans lie at 9-29, 86-106, and 294-314; these read LITATALFTVAVTTITDYAWT, NQYVVVVGAGGVGSWVVNSLV, and ILPVLGTMPSLFGLTITTWIL.

This sequence belongs to the HesA/MoeB/ThiF family.

Its subcellular location is the mitochondrion outer membrane. In terms of biological role, catalyzes the ATP-dependent dehydration of threonylcarbamoyladenosine at position 37 (t(6)A37) to form cyclic t(6)A37 (ct(6)A37) in tRNAs that read codons beginning with adenine. This is tRNA threonylcarbamoyladenosine dehydratase 2 (TCD2) from Saccharomyces cerevisiae (strain ATCC 204508 / S288c) (Baker's yeast).